Reading from the N-terminus, the 423-residue chain is Tegument protein UL43 (423 aa).

Residues 1–12 (MEKTPAETTAVS) show a composition bias toward polar residues. Residues 1–46 (MEKTPAETTAVSAGNVPRDSIPCITNVSADTRGRTRPSRPATVPQR) form a disordered region.

This sequence belongs to the herpesviridae US22 family.

It is found in the virion tegument. The polypeptide is Tegument protein UL43 (UL43) (Homo sapiens (Human)).